Here is a 365-residue protein sequence, read N- to C-terminus: Protein YIM1 (365 aa).

Belongs to the YIM1 family.

The protein localises to the lipid droplet. It localises to the mitochondrion. The chain is Protein YIM1 (YIM1) from Saccharomyces cerevisiae (strain ATCC 204508 / S288c) (Baker's yeast).